Consider the following 481-residue polypeptide: Cysteine--tRNA ligase (481 aa).

C29 contributes to the Zn(2+) binding site. The 'HIGH' region motif lies at 31 to 41 (VTVYDYCHIGH). Zn(2+) contacts are provided by C209, H234, and E238. The short motif at 266–270 (KMSKS) is the 'KMSKS' region element. Residue K269 participates in ATP binding.

It belongs to the class-I aminoacyl-tRNA synthetase family. As to quaternary structure, monomer. Zn(2+) serves as cofactor.

It is found in the cytoplasm. It catalyses the reaction tRNA(Cys) + L-cysteine + ATP = L-cysteinyl-tRNA(Cys) + AMP + diphosphate. This Syntrophotalea carbinolica (strain DSM 2380 / NBRC 103641 / GraBd1) (Pelobacter carbinolicus) protein is Cysteine--tRNA ligase.